A 766-amino-acid chain; its full sequence is MTVSPEQIDRIVSNQHHDPFEILGCHQIQQNGQSVWAVRAYLPNAERVSVLCPEQRQEYPMTPVHHPHFFECHIPVAELNNYQLKIYENGHERVIYDPYAFRSPKLTDFDIHLFAEGNHHRIYEKLGAHLLTVDGVEGVYFAVWAPNARNVSVIGDFNHWDGRKHQMARRGNGIWELFIPGLSVGERYKYEIKNQEGHIYEKSDPYGFYQEPRPKTASIVTDLNSYEWGDSDWLEKRRHTDPLNQPISVYEVHLGSWLHASMEDPPIGADGQPQEPVQAAELKPWARFLTYRELAAKLIPYVKELGYTHIELLPVAEHPFDGSWGYQVTGYYAPTSRYGSPHDFMYFVDQCHQNGIGVIVDWVPGHFPKDGHGLAFFDGTHLYEHADPRKGEHKEWGTLVFNYGRHEVRNFLVANALFWFDKYHIDGIRVDAVASMLYLDYGRKEGEWIPNEYGGRENLEAANFLRQVNHVIFSYFPGILSIAEESTAWPMVSWPTYMGGLGFNLKWNMGWMHDMLDYFSMDPWFRQFHHNNVTFSMWYHHSENFMLALSHDEVVHGKSHIIGKMPGDRWQKFANLRCLFAYMFTHPGKKTMFMGMEFAQWSEWNVWSDLEWHLLQYEPHQQIKRFFGDLNHLYRSQPALYSQDFKQEGFEWIDCSDNRHSVVSFIRWDKDYQDFVVVVCNFTPQPHSHYRIGVPEHGFYRELFNSDAREYGGSNMGNLGGKWADEWPYHQRRYSLDLCLPPLAVLILKLDREKTVAERARYNLQS.

D431 serves as the catalytic Nucleophile. Residue E484 is the Proton donor of the active site.

It belongs to the glycosyl hydrolase 13 family. GlgB subfamily. Monomer.

It catalyses the reaction Transfers a segment of a (1-&gt;4)-alpha-D-glucan chain to a primary hydroxy group in a similar glucan chain.. It functions in the pathway glycan biosynthesis; glycogen biosynthesis. Functionally, catalyzes the formation of the alpha-1,6-glucosidic linkages in glycogen by scission of a 1,4-alpha-linked oligosaccharide from growing alpha-1,4-glucan chains and the subsequent attachment of the oligosaccharide to the alpha-1,6 position. This is 1,4-alpha-glucan branching enzyme GlgB from Thermosynechococcus vestitus (strain NIES-2133 / IAM M-273 / BP-1).